The sequence spans 221 residues: Transcriptional regulator GfcR (221 aa).

The disordered stretch occupies residues 35-59 (ASWLVERSQPTDNSQSSSANNPTEA). The segment covering 42–57 (SQPTDNSQSSSANNPT) has biased composition (polar residues).

This sequence belongs to the purine/pyrimidine phosphoribosyltransferase family. GfcR subfamily.

Functionally, DNA-binding transcriptional regulator that functions as a regulator of central sugar catabolic pathways. In Haloquadratum walsbyi (strain DSM 16790 / HBSQ001), this protein is Transcriptional regulator GfcR.